Here is a 314-residue protein sequence, read N- to C-terminus: Acetaldehyde dehydrogenase 4 (314 aa).

NAD(+) is bound at residue 15–18; the sequence is SGNI. Catalysis depends on Cys133, which acts as the Acyl-thioester intermediate. Residues 164–172 and Asn292 contribute to the NAD(+) site; that span reads SAGPGTRAN.

Belongs to the acetaldehyde dehydrogenase family.

The enzyme catalyses acetaldehyde + NAD(+) + CoA = acetyl-CoA + NADH + H(+). In Burkholderia lata (strain ATCC 17760 / DSM 23089 / LMG 22485 / NCIMB 9086 / R18194 / 383), this protein is Acetaldehyde dehydrogenase 4.